Consider the following 752-residue polypeptide: Multifunctional tryptophan biosynthesis protein (752 aa).

The 200-residue stretch at 3 to 202 (FTLLIDNYDS…IQMKGGKWGG (200 aa)) folds into the Glutamine amidotransferase type-1 domain. 58 to 60 (GPG) provides a ligand contact to L-glutamine. Cys-86 functions as the Nucleophile; for GATase activity in the catalytic mechanism. Position 136–137 (136–137 (SL)) interacts with L-glutamine. Active-site for GATase activity residues include His-176 and Glu-178. The tract at residues 231-495 (ILNRIHAQRL…DTKAFLRSLI (265 aa)) is indole-3-glycerol phosphate synthase. The interval 509-752 (LVKICGIRST…VEAFVKAVRG (244 aa)) is N-(5'-phosphoribosyl)anthranilate isomerase.

The catalysed reaction is N-(5-phospho-beta-D-ribosyl)anthranilate = 1-(2-carboxyphenylamino)-1-deoxy-D-ribulose 5-phosphate. The enzyme catalyses 1-(2-carboxyphenylamino)-1-deoxy-D-ribulose 5-phosphate + H(+) = (1S,2R)-1-C-(indol-3-yl)glycerol 3-phosphate + CO2 + H2O. It carries out the reaction chorismate + L-glutamine = anthranilate + pyruvate + L-glutamate + H(+). Its pathway is amino-acid biosynthesis; L-tryptophan biosynthesis; L-tryptophan from chorismate: step 1/5. The protein operates within amino-acid biosynthesis; L-tryptophan biosynthesis; L-tryptophan from chorismate: step 3/5. It participates in amino-acid biosynthesis; L-tryptophan biosynthesis; L-tryptophan from chorismate: step 4/5. In terms of biological role, trifunctional enzyme bearing the Gln amidotransferase (GATase) domain of anthranilate synthase, indole-glycerolphosphate synthase, and phosphoribosylanthranilate isomerase activities. This chain is Multifunctional tryptophan biosynthesis protein (TRP1), found in Cryptococcus neoformans var. neoformans serotype D (strain B-3501A) (Filobasidiella neoformans).